A 156-amino-acid chain; its full sequence is ATP synthase subunit b (156 aa).

A helical transmembrane segment spans residues 7-27 (LFVQAIVFLILVLFTMKFVWP).

The protein belongs to the ATPase B chain family. F-type ATPases have 2 components, F(1) - the catalytic core - and F(0) - the membrane proton channel. F(1) has five subunits: alpha(3), beta(3), gamma(1), delta(1), epsilon(1). F(0) has three main subunits: a(1), b(2) and c(10-14). The alpha and beta chains form an alternating ring which encloses part of the gamma chain. F(1) is attached to F(0) by a central stalk formed by the gamma and epsilon chains, while a peripheral stalk is formed by the delta and b chains.

The protein resides in the cell inner membrane. Its function is as follows. F(1)F(0) ATP synthase produces ATP from ADP in the presence of a proton or sodium gradient. F-type ATPases consist of two structural domains, F(1) containing the extramembraneous catalytic core and F(0) containing the membrane proton channel, linked together by a central stalk and a peripheral stalk. During catalysis, ATP synthesis in the catalytic domain of F(1) is coupled via a rotary mechanism of the central stalk subunits to proton translocation. Component of the F(0) channel, it forms part of the peripheral stalk, linking F(1) to F(0). This Acidovorax sp. (strain JS42) protein is ATP synthase subunit b.